The primary structure comprises 503 residues: Lysine--tRNA ligase (503 aa).

Residues Glu414 and Glu421 each coordinate Mg(2+).

This sequence belongs to the class-II aminoacyl-tRNA synthetase family. As to quaternary structure, homodimer. Mg(2+) serves as cofactor.

Its subcellular location is the cytoplasm. It carries out the reaction tRNA(Lys) + L-lysine + ATP = L-lysyl-tRNA(Lys) + AMP + diphosphate. The chain is Lysine--tRNA ligase from Laribacter hongkongensis (strain HLHK9).